The following is a 278-amino-acid chain: Embryonic polyadenylate-binding protein 2 (278 aa).

Disordered regions lie at residues 21–66 (VSSD…GDAG) and 101–128 (EGTP…LSPE). A compositionally biased stretch (basic and acidic residues) spans 35-50 (ETKEILGPEGGEGKEE). A compositionally biased stretch (acidic residues) spans 51–63 (KEEEEDAEEDQDG). The region spanning 147–224 (RSVYVGNVDY…RVIKVLPKRT (78 aa)) is the RRM domain. The tract at residues 227-278 (PGISSTDRGGLRGHPGSRGAPFPHSGLQGRPRLRPQGQNRARGKFSPWFSPY) is disordered.

As to expression, expressed in various adult tissues.

The protein resides in the cytoplasm. Binds the poly(A) tail of mRNA. This is Embryonic polyadenylate-binding protein 2 (PABPN1L) from Homo sapiens (Human).